A 298-amino-acid polypeptide reads, in one-letter code: MSDANLDSSKKNFLEGEVDDEESVILTLVPVKDDANMEQMEPSVSSTSDVKLEKPKKYNPGHLLQTNEQFTAPQKARCKIPALPLPTILPPINKVCRDTLRDWCQQLGLSTNGKKIEVYLRLHRHAYPEQRQDMPEMSQETRLQRCSRKRKAVTKRARLQRSYEMNERAEETNTVEVITSAPGAMLASWARIAARAVQPKALNSCSIPVSVEAFLMQASGVRWCVVHGRLLSADTKGWVRLQFHAGQAWVPTTHRRMISLFLLPACIFPSPGIEDNMLCPDCAKRNKKMMKRLMTVEK.

The disordered stretch occupies residues 36–61; sequence NMEQMEPSVSSTSDVKLEKPKKYNPG. One can recognise an SAP domain in the interval 92–126; that stretch reads INKVCRDTLRDWCQQLGLSTNGKKIEVYLRLHRHA.

In terms of assembly, interacts with DPPA4. Expressed in embryonic stem cells. No expression is seen in 5 months embryo, mesenchymal stem cells, embryonic fibrocytes and adult tissues.

Its subcellular location is the nucleus. In terms of biological role, binds to target gene promoters, including NKX2-5 and SYCE1, but not GATA4, and may be involved in the maintenance of the active epigenetic status of these genes. This is Developmental pluripotency-associated protein 2 (DPPA2) from Homo sapiens (Human).